The chain runs to 382 residues: Small ribosomal subunit protein mS35 (382 aa).

The segment covering 363-375 has biased composition (gly residues); it reads GRGGKALPGGKGG. Residues 363-382 form a disordered region; that stretch reads GRGGKALPGGKGGKMQRSKR.

This sequence belongs to the mitochondrion-specific ribosomal protein mS35 family. In terms of assembly, component of the mitochondrial small ribosomal subunit (mt-SSU). Mature N.crassa 74S mitochondrial ribosomes consist of a small (37S) and a large (54S) subunit. The 37S small subunit contains a 16S ribosomal RNA (16S mt-rRNA) and 32 different proteins. The 54S large subunit contains a 23S rRNA (23S mt-rRNA) and 42 different proteins.

It localises to the mitochondrion. In terms of biological role, component of the mitochondrial ribosome (mitoribosome), a dedicated translation machinery responsible for the synthesis of mitochondrial genome-encoded proteins, including at least some of the essential transmembrane subunits of the mitochondrial respiratory chain. The mitoribosomes are attached to the mitochondrial inner membrane and translation products are cotranslationally integrated into the membrane. This Neurospora crassa (strain ATCC 24698 / 74-OR23-1A / CBS 708.71 / DSM 1257 / FGSC 987) protein is Small ribosomal subunit protein mS35 (rsm24).